Consider the following 192-residue polypeptide: Urease accessory protein UreE (192 aa).

The tract at residues 170–192 is disordered; the sequence is EHHGHSHSHSHDHVHDEKCGHKH. A compositionally biased stretch (basic and acidic residues) spans 178–192; the sequence is HSHDHVHDEKCGHKH.

This sequence belongs to the UreE family.

Its subcellular location is the cytoplasm. In terms of biological role, involved in urease metallocenter assembly. Binds nickel. Probably functions as a nickel donor during metallocenter assembly. This is Urease accessory protein UreE from Cupriavidus necator (strain ATCC 17699 / DSM 428 / KCTC 22496 / NCIMB 10442 / H16 / Stanier 337) (Ralstonia eutropha).